The sequence spans 194 residues: dTTP/UTP pyrophosphatase (194 aa).

Catalysis depends on aspartate 76, which acts as the Proton acceptor.

This sequence belongs to the Maf family. YhdE subfamily. The cofactor is a divalent metal cation.

Its subcellular location is the cytoplasm. The enzyme catalyses dTTP + H2O = dTMP + diphosphate + H(+). It catalyses the reaction UTP + H2O = UMP + diphosphate + H(+). Nucleoside triphosphate pyrophosphatase that hydrolyzes dTTP and UTP. May have a dual role in cell division arrest and in preventing the incorporation of modified nucleotides into cellular nucleic acids. The sequence is that of dTTP/UTP pyrophosphatase from Shewanella sp. (strain MR-7).